Reading from the N-terminus, the 317-residue chain is Sulfate adenylyltransferase subunit 2 (317 aa).

Basic and acidic residues predominate over residues 1–10 (MPHTLPETEL). Disordered regions lie at residues 1-21 (MPHT…PPLD) and 295-317 (RQGR…EGYF).

This sequence belongs to the PAPS reductase family. CysD subfamily. In terms of assembly, heterodimer composed of CysD, the smaller subunit, and CysN.

It catalyses the reaction sulfate + ATP + H(+) = adenosine 5'-phosphosulfate + diphosphate. It participates in sulfur metabolism; hydrogen sulfide biosynthesis; sulfite from sulfate: step 1/3. Functionally, with CysN forms the ATP sulfurylase (ATPS) that catalyzes the adenylation of sulfate producing adenosine 5'-phosphosulfate (APS) and diphosphate, the first enzymatic step in sulfur assimilation pathway. APS synthesis involves the formation of a high-energy phosphoric-sulfuric acid anhydride bond driven by GTP hydrolysis by CysN coupled to ATP hydrolysis by CysD. This Rhizobium meliloti (strain 1021) (Ensifer meliloti) protein is Sulfate adenylyltransferase subunit 2 (cysD).